Reading from the N-terminus, the 221-residue chain is NIP3 homolog (221 aa).

The tract at residues 24–55 (GEKTDESVQPQQQTEQSSAQQTTPSAKAVSNP) is disordered. A Glycyl lysine isopeptide (Lys-Gly) (interchain with G-Cter in ubiquitin) cross-link involves residue K26. A compositionally biased stretch (low complexity) spans 32-49 (QPQQQTEQSSAQQTTPSA). The chain crosses the membrane as a helical span at residues 189-209 (VVFGFLVTNIFSFVVGAAVGF). Residues 189–209 (VVFGFLVTNIFSFVVGAAVGF) form a required for initiation of apoptosis region.

Belongs to the NIP3 family. Homodimer; via transmembrane domain. Interacts with ced-3 and ced-9. In terms of processing, ubiquitinated and degraded by the proteasome. Under oxidative stress conditions, ubiquitinated at Lys-26 in a pink-1 dependent manner. Colocalizes with pdr-1 and may be ubiquitinated by it. Expressed in all somatic tissues including neurons, pharynx, intestine, body wall muscles and vulva muscles.

It is found in the mitochondrion outer membrane. Functionally, initiates apoptosis in a BH3-independent mechanism possibly by recruiting ced-3 to mitochondria and other cytoplasmic membranes. Has a role in lifespan and tumor growth. Required for the induction of mitophagy under stress conditions. In Caenorhabditis elegans, this protein is NIP3 homolog.